We begin with the raw amino-acid sequence, 271 residues long: 60 kDa heat shock protein, mitochondrial (271 aa).

Phosphoserine occurs at positions 30 and 33. 50-54 (DGTTT) is an ATP binding site. The residue at position 83 (Lys83) is an N6-acetyllysine. N6-acetyllysine; alternate is present on residues Lys84, Lys97, and Lys112. Lys84, Lys97, and Lys112 each carry N6-succinyllysine; alternate. Residue Lys125 is modified to N6-acetyllysine. An N6-acetyllysine; alternate modification is found at Lys126. Residue Lys126 is modified to N6-succinyllysine; alternate. Residue Lys145 is modified to N6-acetyllysine. Residue Lys175 is modified to N6-succinyllysine. N6-acetyllysine is present on residues Lys188 and Lys237. Gly257 is a binding site for ATP. Lys270 bears the N6-acetyllysine mark.

This sequence belongs to the chaperonin (HSP60) family. As to quaternary structure, homoheptamer arranged in a ring structure. The functional units of these chaperonins consist of heptameric rings of the large subunit Hsp60, which function as a back-to-back double ring. Interacts with 2 heptameric Hsp10 rings to form the symmetrical football complex. Interacts with HRAS. Interacts with ATAD3A. Interacts with ETFBKMT and EEF1AKMT3. Interacts with MFHAS1. Detected at higher levels in caput epididymal spermatazoa than in cauda epididymal spermatazoa (at protein level).

Its subcellular location is the mitochondrion matrix. It carries out the reaction ATP + H2O + a folded polypeptide = ADP + phosphate + an unfolded polypeptide.. In terms of biological role, chaperonin implicated in mitochondrial protein import and macromolecular assembly. Together with Hsp10, facilitates the correct folding of imported proteins. May also prevent misfolding and promote the refolding and proper assembly of unfolded polypeptides generated under stress conditions in the mitochondrial matrix. The functional units of these chaperonins consist of heptameric rings of the large subunit Hsp60, which function as a back-to-back double ring. In a cyclic reaction, Hsp60 ring complexes bind one unfolded substrate protein per ring, followed by the binding of ATP and association with 2 heptameric rings of the co-chaperonin Hsp10. This leads to sequestration of the substrate protein in the inner cavity of Hsp60 where, for a certain period of time, it can fold undisturbed by other cell components. Synchronous hydrolysis of ATP in all Hsp60 subunits results in the dissociation of the chaperonin rings and the release of ADP and the folded substrate protein. The polypeptide is 60 kDa heat shock protein, mitochondrial (Mesocricetus auratus (Golden hamster)).